A 389-amino-acid polypeptide reads, in one-letter code: Urotensin-2 receptor (389 aa).

Composition is skewed to polar residues over residues 1-10 and 28-39; these read MALTPESPSS and PNATLNSSWASP. The segment at 1 to 39 is disordered; it reads MALTPESPSSFPGLAAIGSSVPEPPGSPNATLNSSWASP. The Extracellular portion of the chain corresponds to 1–54; it reads MALTPESPSSFPGLAAIGSSVPEPPGSPNATLNSSWASPTEPSSLEDLVATGAI. N-linked (GlcNAc...) asparagine glycosylation is found at asparagine 29 and asparagine 33. The chain crosses the membrane as a helical span at residues 55–77; the sequence is GTLLSAMGVVGVVGNAYTLVVTC. Topologically, residues 78-87 are cytoplasmic; the sequence is RSLRAVASMY. Residues 88 to 113 traverse the membrane as a helical segment; sequence IYVVNLALADLLYLLSIPFIVATYIT. Topologically, residues 114 to 124 are extracellular; that stretch reads KEWHFGDVGCR. The cysteines at positions 123 and 199 are disulfide-linked. A helical transmembrane segment spans residues 125–146; sequence VLFSLDFLTMHASIFTLTVMSS. Over 147 to 167 the chain is Cytoplasmic; that stretch reads ERYAAVLRPLDTVQRPKGYRK. Residues 168-186 form a helical membrane-spanning segment; it reads LLALGTWLLALLLTLPVML. Residues 187-209 are Extracellular-facing; that stretch reads AMRLVRRGPKSLCLPAWGPRAHR. A helical transmembrane segment spans residues 210-232; sequence AYLTLLFATSIAGPGLLIGLLYA. The Cytoplasmic portion of the chain corresponds to 233–258; that stretch reads RLARAYRRSQRASFKRARRPGARALR. The chain crosses the membrane as a helical span at residues 259-284; that stretch reads LVLGIVLLFWACFLPFWLWQLLAQYR. Topologically, residues 285 to 297 are extracellular; that stretch reads EAPLAPRTARIVN. A helical membrane pass occupies residues 298–318; the sequence is YLTTCLTYGNSCANPFLYTLL. Topologically, residues 319 to 389 are cytoplasmic; sequence TRNYRDHLRG…PALESPGDPA (71 aa). Residues 328-366 are disordered; that stretch reads GRVRSPGSGGVRGPVPSLQPRARFQRGSGRSLSSCSPQP. Polar residues predominate over residues 355 to 366; the sequence is SGRSLSSCSPQP.

It belongs to the G-protein coupled receptor 1 family.

Its subcellular location is the cell membrane. Functionally, high affinity receptor for urotensin-2 and urotensin-2B. The activity of this receptor is mediated by a G-protein that activate a phosphatidylinositol-calcium second messenger system. This is Urotensin-2 receptor (UTS2R) from Macaca mulatta (Rhesus macaque).